The following is a 515-amino-acid chain: Envelope glycoprotein (515 aa).

Positions 1–33 are cleaved as a signal peptide; the sequence is MPKERRSRRRPQPIIRWVSLTLTLLSLCQPIQT. At 34-435 the chain is on the extracellular side; sequence WRCSLSLGNQ…LGLTAWVRET (402 aa). N129 and N203 each carry an N-linked (GlcNAc...) asparagine; by host glycan. The CXXC motif lies at 212 to 215; it reads CAIC. 3 disulfides stabilise this stretch: C212-C215, C212-C392, and C384-C391. N230, N251, N256, N271, and N287 each carry an N-linked (GlcNAc...) asparagine; by host glycan. A fusion peptide region spans residues 304–324; that stretch reads AAALTLGLALSVGLTGINVAV. Coiled-coil stretches lie at residues 330-376 and 388-420; these read QRLT…WLYI and NEPCCFLRIQNDSIIRLGDLQPLSQRVSTDWQW. Residue N351 is glycosylated (N-linked (GlcNAc...) asparagine; by host). Positions 365 to 381 are immunosuppression; it reads AQNRRGLDWLYIRLGFQ. Residues 384–392 carry the CX6CC motif; that stretch reads CPTINEPCC. N398 is a glycosylation site (N-linked (GlcNAc...) asparagine; by host). Residues 436–456 form a helical membrane-spanning segment; the sequence is IHSVLSLFLLALFLLFLAPCL. C455 carries the S-palmitoyl cysteine; by host lipid modification. Residues 457-515 lie on the Cytoplasmic side of the membrane; it reads IKCLTSRLLKLLRQAPHFPEISLAPKPDSDYQALLPSAPEIYSHLSPTKPDYINLRPCP.

The mature envelope protein (Env) consists of a trimer of SU-TM heterodimers attached by a labile interchain disulfide bond. In terms of processing, specific enzymatic cleavages in vivo yield mature proteins. Envelope glycoproteins are synthesized as an inactive precursor that is N-glycosylated and processed likely by host cell furin or by a furin-like protease in the Golgi to yield the mature SU and TM proteins. The cleavage site between SU and TM requires the minimal sequence [KR]-X-[KR]-R. Post-translationally, the CXXC motif is highly conserved across a broad range of retroviral envelope proteins. It is thought to participate in the formation of a labile disulfide bond possibly with the CX6CC motif present in the transmembrane protein. Isomerization of the intersubunit disulfide bond to an SU intrachain disulfide bond is thought to occur upon receptor recognition in order to allow membrane fusion. The transmembrane protein is palmitoylated.

The protein localises to the virion membrane. It localises to the host cell membrane. Functionally, the surface protein (SU) attaches the virus to the host cell by binding to its receptor. This interaction triggers the refolding of the transmembrane protein (TM) and is thought to activate its fusogenic potential by unmasking its fusion peptide. Fusion occurs at the host cell plasma membrane. Its function is as follows. The transmembrane protein (TM) acts as a class I viral fusion protein. Under the current model, the protein has at least 3 conformational states: pre-fusion native state, pre-hairpin intermediate state, and post-fusion hairpin state. During viral and target cell membrane fusion, the coiled coil regions (heptad repeats) assume a trimer-of-hairpins structure, positioning the fusion peptide in close proximity to the C-terminal region of the ectodomain. The formation of this structure appears to drive apposition and subsequent fusion of viral and target cell membranes. Membranes fusion leads to delivery of the nucleocapsid into the cytoplasm. The protein is Envelope glycoprotein (env) of Bovine leukemia virus (isolate Belgium LB285) (BLV).